The chain runs to 442 residues: GTPase Der (442 aa).

2 EngA-type G domains span residues 2–167 and 175–351; these read RTIA…PIQN and FKFC…EQAM. GTP contacts are provided by residues 8–15, 55–59, 119–122, 181–188, 228–232, and 293–296; these read GKPNVGKS, DTGGI, NKVE, GRPNVGKS, DTAGV, and NKWD. The KH-like domain maps to 352–436; the sequence is RKVATSLLND…PITLYWQDKN (85 aa).

The protein belongs to the TRAFAC class TrmE-Era-EngA-EngB-Septin-like GTPase superfamily. EngA (Der) GTPase family. Associates with the 50S ribosomal subunit.

Functionally, GTPase that plays an essential role in the late steps of ribosome biogenesis. The polypeptide is GTPase Der (Ureaplasma urealyticum serovar 10 (strain ATCC 33699 / Western)).